Reading from the N-terminus, the 291-residue chain is Putative transport permease ycf38 (291 aa).

6 helical membrane passes run 47–67, 87–107, 135–155, 165–185, 195–215, and 262–282; these read ATLM…GGLF, SGII…PLMF, FMTC…LFMG, LIFA…SLAL, LLAL…ALAP, and ISLG…AYIV. In terms of domain architecture, ABC transmembrane type-2 spans 47 to 289; that stretch reads ATLMAGIIQP…YIVSNILKAR (243 aa).

Belongs to the ABC-2 integral membrane protein family.

It is found in the plastid. It localises to the chloroplast membrane. The sequence is that of Putative transport permease ycf38 (ycf38) from Porphyra purpurea (Red seaweed).